The primary structure comprises 75 residues: Alpha-elapitoxin-Bc2c (75 aa).

The first 2 residues, Tyr-1–Thr-2, serve as a signal peptide directing secretion. Cystine bridges form between Cys-5-Cys-24, Cys-17-Cys-45, Cys-30-Cys-34, Cys-49-Cys-60, and Cys-61-Cys-66.

Belongs to the three-finger toxin family. Long-chain subfamily. Type II alpha-neurotoxin sub-subfamily. In terms of assembly, monomer in solution, homodimer in crystal state. As to expression, expressed by the venom gland.

It is found in the secreted. Functionally, binds to muscular and neuronal nicotinic acetylcholine receptor (nAChR) and inhibits acetylcholine from binding to the receptor, thereby impairing neuromuscular and neuronal transmission. Blocks muscle type nAChR. Also binds with high affinity to alpha-7/CHRNA7 nAChRs. In addition, shows a weak inhibition of neuronal alpha-3-beta-2/CHRNA3-CHRNB2 nAChR. Selectively binds to alpha-1-delta subunit interface of the mouse muscle nicotinic acetylcholine receptor, with a 10-fold higher affinity for the adult than for the fetal receptors. In vivo, when intraperitoneally injected into mice, causes flaccid paralysis and respiratory distress, followed by death within 2-4 hours. This Bungarus candidus (Malayan krait) protein is Alpha-elapitoxin-Bc2c.